We begin with the raw amino-acid sequence, 210 residues long: Glycerol-3-phosphate acyltransferase 2 (210 aa).

6 consecutive transmembrane segments (helical) span residues 4–24, 52–72, 73–93, 114–134, 141–161, and 163–183; these read LIMV…PAPY, VGFW…ALAM, AVAN…LMAI, IGIL…CFLI, FPTL…WLGQ, and DMGK…MYIP.

This sequence belongs to the PlsY family. Probably interacts with PlsX.

The protein localises to the cell membrane. It catalyses the reaction an acyl phosphate + sn-glycerol 3-phosphate = a 1-acyl-sn-glycero-3-phosphate + phosphate. The protein operates within lipid metabolism; phospholipid metabolism. Its function is as follows. Catalyzes the transfer of an acyl group from acyl-phosphate (acyl-PO(4)) to glycerol-3-phosphate (G3P) to form lysophosphatidic acid (LPA). This enzyme utilizes acyl-phosphate as fatty acyl donor, but not acyl-CoA or acyl-ACP. This chain is Glycerol-3-phosphate acyltransferase 2, found in Dehalococcoides mccartyi (strain CBDB1).